The sequence spans 496 residues: Apolipoprotein N-acyltransferase (496 aa).

6 consecutive transmembrane segments (helical) span residues 6-26 (IICLLLGILSGLVFAPIFFIP), 50-70 (FGYLFGFGHFLSGMYWISIGV), 77-97 (FWWAIPFALFGLPIILAFFIS), 114-134 (LIFCLLWVLFEWIRSWILTGL), 148-168 (ILIQPLSITGIYGLSFIVIYI), and 183-203 (LKILLASSMLILTVMVIYGAV). The CN hydrolase domain maps to 220–464 (VQPSIPQTAK…QGLIPQKLTT (245 aa)). Glu-259 (proton acceptor) is an active-site residue. Residue Lys-322 is part of the active site. Cys-372 (nucleophile) is an active-site residue. Residues 474-494 (FAMLLSIVFIILIHYLLSLIF) traverse the membrane as a helical segment.

Belongs to the CN hydrolase family. Apolipoprotein N-acyltransferase subfamily.

It localises to the cell inner membrane. It catalyses the reaction N-terminal S-1,2-diacyl-sn-glyceryl-L-cysteinyl-[lipoprotein] + a glycerophospholipid = N-acyl-S-1,2-diacyl-sn-glyceryl-L-cysteinyl-[lipoprotein] + a 2-acyl-sn-glycero-3-phospholipid + H(+). The protein operates within protein modification; lipoprotein biosynthesis (N-acyl transfer). Functionally, catalyzes the phospholipid dependent N-acylation of the N-terminal cysteine of apolipoprotein, the last step in lipoprotein maturation. The polypeptide is Apolipoprotein N-acyltransferase (Rickettsia prowazekii (strain Madrid E)).